A 490-amino-acid polypeptide reads, in one-letter code: Cysteine protease 1 (490 aa).

The first 31 residues, 1 to 31 (MAGGGGKSVAAALAMACFLLILAAFAPPAAA), serve as a signal peptide directing secretion. The propeptide at 32–154 (APPDIMSIIR…EAYRHDGVEA (123 aa)) is activation peptide. Intrachain disulfides connect Cys-177–Cys-220, Cys-211–Cys-253, Cys-311–Cys-364, Cys-395–Cys-407, and Cys-401–Cys-422. Residue Cys-180 is part of the active site. Residues His-317 and Asn-339 contribute to the active site. N-linked (GlcNAc...) asparagine glycosylation occurs at Asn-356. A propeptide spans 379–490 (NPKPSPPSPA…FVVLNREDLV (112 aa)) (removed in mature form).

It belongs to the peptidase C1 family. As to expression, highly expressed in the tapetum and developing pollen of the anther locules. Weakly expressed in root and germinating seed, hardly in the anther-less-flower and not detected in leaf.

Cysteine protease that may play a role in pollen development. May be regulated by the transcription factor UDT1 in developing anthers and play a role in tapetum development. Positively regulated by the transcription factor TDR in developing anthers and may play a role in tapetum programmed cell death (PCD). The sequence is that of Cysteine protease 1 (CP1) from Oryza sativa subsp. japonica (Rice).